A 152-amino-acid chain; its full sequence is UPF0266 membrane protein YobD (152 aa).

The Periplasmic segment spans residues 1-5 (MTITD). Residues 6 to 26 (LVLILFIAALLAYALYDQFIM) form a helical membrane-spanning segment. At 27 to 44 (PRRNGPTLLSIALLRRGR) the chain is on the cytoplasmic side. Residues 45–65 (IDSVIFVGLVAILIYNNVTSH) traverse the membrane as a helical segment. Gly66 is a topological domain (periplasmic). The chain crosses the membrane as a helical span at residues 67–87 (AQMTTWLLSALALMGFYIFWI). Over 88–152 (RTPRIIFKQR…KIYKLLIENQ (65 aa)) the chain is Cytoplasmic.

It belongs to the UPF0266 family.

Its subcellular location is the cell inner membrane. This is UPF0266 membrane protein YobD (yobD) from Salmonella typhi.